Reading from the N-terminus, the 511-residue chain is Bifunctional purine biosynthesis protein PurH (511 aa).

The MGS-like domain occupies 1 to 144 (MKTALLSVSD…KNFASVLPVV (144 aa)).

It belongs to the PurH family.

It catalyses the reaction (6R)-10-formyltetrahydrofolate + 5-amino-1-(5-phospho-beta-D-ribosyl)imidazole-4-carboxamide = 5-formamido-1-(5-phospho-D-ribosyl)imidazole-4-carboxamide + (6S)-5,6,7,8-tetrahydrofolate. The catalysed reaction is IMP + H2O = 5-formamido-1-(5-phospho-D-ribosyl)imidazole-4-carboxamide. Its pathway is purine metabolism; IMP biosynthesis via de novo pathway; 5-formamido-1-(5-phospho-D-ribosyl)imidazole-4-carboxamide from 5-amino-1-(5-phospho-D-ribosyl)imidazole-4-carboxamide (10-formyl THF route): step 1/1. The protein operates within purine metabolism; IMP biosynthesis via de novo pathway; IMP from 5-formamido-1-(5-phospho-D-ribosyl)imidazole-4-carboxamide: step 1/1. This Pediococcus pentosaceus (strain ATCC 25745 / CCUG 21536 / LMG 10740 / 183-1w) protein is Bifunctional purine biosynthesis protein PurH.